The following is a 441-amino-acid chain: Xaa-Pro dipeptidase (441 aa).

5 residues coordinate Mn(2+): Asp244, Asp255, His336, Glu381, and Glu420.

Belongs to the peptidase M24B family. Bacterial-type prolidase subfamily. It depends on Mn(2+) as a cofactor.

It carries out the reaction Xaa-L-Pro dipeptide + H2O = an L-alpha-amino acid + L-proline. Its function is as follows. Splits dipeptides with a prolyl residue in the C-terminal position. This chain is Xaa-Pro dipeptidase, found in Xanthomonas axonopodis pv. citri (strain 306).